Reading from the N-terminus, the 256-residue chain is Small ribosomal subunit protein eS1B (256 aa).

N-acetylalanine; partial is present on Ala2.

It belongs to the eukaryotic ribosomal protein eS1 family. As to quaternary structure, component of the small ribosomal subunit. Mature ribosomes consist of a small (40S) and a large (60S) subunit. The 40S subunit contains about 33 different proteins and 1 molecule of RNA (18S). The 60S subunit contains about 49 different proteins and 3 molecules of RNA (25S, 5.8S and 5S).

The protein resides in the cytoplasm. The protein is Small ribosomal subunit protein eS1B of Clavispora lusitaniae (strain ATCC 42720) (Yeast).